Here is a 476-residue protein sequence, read N- to C-terminus: 3-isopropylmalate dehydratase large subunit (476 aa).

The [4Fe-4S] cluster site is built by cysteine 353, cysteine 413, and cysteine 416.

This sequence belongs to the aconitase/IPM isomerase family. LeuC type 1 subfamily. In terms of assembly, heterodimer of LeuC and LeuD. It depends on [4Fe-4S] cluster as a cofactor.

It catalyses the reaction (2R,3S)-3-isopropylmalate = (2S)-2-isopropylmalate. It participates in amino-acid biosynthesis; L-leucine biosynthesis; L-leucine from 3-methyl-2-oxobutanoate: step 2/4. In terms of biological role, catalyzes the isomerization between 2-isopropylmalate and 3-isopropylmalate, via the formation of 2-isopropylmaleate. This chain is 3-isopropylmalate dehydratase large subunit, found in Yersinia pseudotuberculosis serotype IB (strain PB1/+).